We begin with the raw amino-acid sequence, 175 residues long: tRNA-acetylating toxin 3 (175 aa).

Acetyl-CoA-binding residues include L95, V97, G103, G105, G107, A108, D133, Q138, D141, and W142. Y143 is a catalytic residue. 2 residues coordinate acetyl-CoA: G145 and F146.

Belongs to the acetyltransferase family. GNAT subfamily. As to quaternary structure, homodimer (in absence of antitoxin); has a condensed and elongated form. Forms a complex with cognate antitoxin TacA3. Forms a 4:2 antitoxin:toxin complex with cognate antitoxin TacA3. Forms a 4:4 antitoxin:toxin complex with promoter DNA, where 2 TacT3 dimers bridge 2 TacA3 dimers. Only TacA3 contacts promoter DNA in the octomeric form. TacT3 may contact DNA in the hexameric form.

It carries out the reaction glycyl-tRNA(Gly) + acetyl-CoA = N-acetylglycyl-tRNA(Gly) + CoA + H(+). Functionally, toxic component of a type II toxin-antitoxin (TA) system. Acetylates tRNA and inhibits translation. Acetylates only Gly-tRNA on all 3 Gly-tRNA(Gly) isoacceptors in situ. In vitro acetylates mainly Ile/Leu and Gly. Overexpression during the lag phase of a tacA3-tacT3 deletion strain leads to a 150-fold increase in persister cells in the presence of cefotaxime and a non-growth state in the absence of antibiotic. Persister cell formation and the growth defect are neutralized by cognate antitoxin TacA3, but not by TacA1 or TacA2. Plays a role in persister cell formation. Its function is as follows. The TacA3-TacT3 complex both represses and derepresses expression of its own operon. The hexameric 4:2 TacA3-TacT3 complex binds promoter DNA and represses its transcription; both subunits are required. The octomeric 4:4 TacA3-TacT3 complex derepresses the operon. The shift from hexameric to octomeric complex probably alters DNA-binding, leading to dissociation from the operator DNA and derepression. This Salmonella typhimurium (strain 14028s / SGSC 2262) protein is tRNA-acetylating toxin 3.